A 448-amino-acid chain; its full sequence is B-cell lymphoma 3 protein homolog (448 aa).

A disordered region spans residues 1–54; the sequence is MPRCPAGAMDEGPVDLRTRPKGTPGAALPLRKRPLRPASPEPATTRSPAGPLDA. Residue Ser39 is modified to Phosphoserine. ANK repeat units follow at residues 129-161, 166-195, 199-228, 236-265, 270-299, 303-332, and 333-362; these read DGDT…REVD, LRQT…SPMA, HGQT…SGSV, EGLT…DIDA, SGRS…NVNA, SGSS…DSGL, and KNCH…RAAS. Positions 356 to 448 are disordered; sequence KASRAASGSQ…VPPSPAPGSS (93 aa). Polar residues predominate over residues 361 to 376; that stretch reads ASGSQPEPSPDQSATN. Phosphoserine is present on Ser369. Residues 377–398 show a composition bias toward low complexity; sequence SPESSSRLSSNGLQSSPSSSPS. Phosphoserine; by GSK3 is present on residues Ser396 and Ser400. Residues 411–423 are compositionally biased toward polar residues; it reads TPQNFFLPTTSTP. Low complexity predominate over residues 425-436; it reads FLPFPGVLRGPG. Residues 437–448 are compositionally biased toward pro residues; it reads RPVPPSPAPGSS.

As to quaternary structure, component of a complex consisting of the NF-kappa-B p52-p52 homodimer and BCL3. Component of a complex consisting of the NF-kappa-B p50-p50 homodimer and BCL3. Interacts with N4BP2, COPS5 and PIR. Interacts with CYLD. Post-translationally, polyubiquitinated. Ubiquitination via 'Lys-63'-linked ubiquitin chains is required for nuclear accumulation. Deubiquitinated by CYLD, which acts on 'Lys-63'-linked ubiquitin chains. Deubiquitination by CYLD prevents nuclear accumulation. In terms of processing, activated by phosphorylation.

It is found in the nucleus. The protein resides in the cytoplasm. The protein localises to the perinuclear region. In terms of biological role, contributes to the regulation of transcriptional activation of NF-kappa-B target genes. In the cytoplasm, inhibits the nuclear translocation of the NF-kappa-B p50 subunit. In the nucleus, acts as a transcriptional activator that promotes transcription of NF-kappa-B target genes. Contributes to the regulation of cell proliferation. This chain is B-cell lymphoma 3 protein homolog (Bcl3), found in Mus musculus (Mouse).